The chain runs to 396 residues: 1-deoxy-D-xylulose 5-phosphate reductoisomerase (396 aa).

The NADPH site is built by Thr-13, Gly-14, Ser-15, Ile-16, and Asn-127. Lys-128 provides a ligand contact to 1-deoxy-D-xylulose 5-phosphate. Glu-129 is an NADPH binding site. Residue Asp-153 coordinates Mn(2+). 4 residues coordinate 1-deoxy-D-xylulose 5-phosphate: Ser-154, Glu-155, Ser-184, and His-207. A Mn(2+)-binding site is contributed by Glu-155. NADPH is bound at residue Gly-213. Residues Ser-220, Asn-225, Lys-226, and Glu-229 each coordinate 1-deoxy-D-xylulose 5-phosphate. Glu-229 is a Mn(2+) binding site.

Belongs to the DXR family. Requires Mg(2+) as cofactor. It depends on Mn(2+) as a cofactor.

The catalysed reaction is 2-C-methyl-D-erythritol 4-phosphate + NADP(+) = 1-deoxy-D-xylulose 5-phosphate + NADPH + H(+). The protein operates within isoprenoid biosynthesis; isopentenyl diphosphate biosynthesis via DXP pathway; isopentenyl diphosphate from 1-deoxy-D-xylulose 5-phosphate: step 1/6. Functionally, catalyzes the NADPH-dependent rearrangement and reduction of 1-deoxy-D-xylulose-5-phosphate (DXP) to 2-C-methyl-D-erythritol 4-phosphate (MEP). This is 1-deoxy-D-xylulose 5-phosphate reductoisomerase from Pseudomonas syringae pv. tomato (strain ATCC BAA-871 / DC3000).